Consider the following 189-residue polypeptide: Translation initiation factor IF-3 (189 aa).

Belongs to the IF-3 family. As to quaternary structure, monomer.

It is found in the cytoplasm. In terms of biological role, IF-3 binds to the 30S ribosomal subunit and shifts the equilibrium between 70S ribosomes and their 50S and 30S subunits in favor of the free subunits, thus enhancing the availability of 30S subunits on which protein synthesis initiation begins. This chain is Translation initiation factor IF-3, found in Corynebacterium glutamicum (strain R).